The chain runs to 161 residues: uncharacterized protein (161 aa).

The next 4 helical transmembrane spans lie at 22–42 (LFFI…VFGH), 43–63 (LTVG…ALLV), 89–109 (LAII…AGLG), and 110–130 (VVFG…LPVL). Positions 141 to 161 (VATYSSNGQTGGSEGRSASDD) are disordered.

It to M.leprae ML1138.

It is found in the cell membrane. This is an uncharacterized protein from Mycobacterium bovis (strain ATCC BAA-935 / AF2122/97).